The sequence spans 136 residues: Histone H3-7 (136 aa).

The disordered stretch occupies residues 1–43 (MARTKQTARKSTGGKAPRKQLATKAARKSAPATGGVKKPHRYR). Arginine 3 is subject to Asymmetric dimethylarginine. The residue at position 3 (arginine 3) is a Citrulline; alternate. Threonine 4 is modified (phosphothreonine). Lysine 5 carries the allysine; alternate modification. At lysine 5 the chain carries N6,N6,N6-trimethyllysine; alternate. Position 5 is an N6,N6-dimethyllysine; alternate (lysine 5). Lysine 5 is modified (N6-(2-hydroxyisobutyryl)lysine; alternate). An N6-(beta-hydroxybutyryl)lysine; alternate modification is found at lysine 5. Lysine 5 carries the post-translational modification N6-acetyllysine; alternate. At lysine 5 the chain carries N6-methyllysine; alternate. Glutamine 6 is modified (5-glutamyl dopamine; alternate). 5-glutamyl serotonin; alternate is present on glutamine 6. Position 7 is a phosphothreonine (threonine 7). Residue arginine 9 is modified to Citrulline; alternate. Arginine 9 bears the Symmetric dimethylarginine mark. Lysine 10 carries the post-translational modification N6,N6,N6-trimethyllysine; alternate. Lysine 10 is subject to N6,N6-dimethyllysine; alternate. Lysine 10 bears the N6-(2-hydroxyisobutyryl)lysine; alternate mark. Lysine 10 bears the N6-(beta-hydroxybutyryl)lysine; alternate mark. Position 10 is an N6-acetyllysine; alternate (lysine 10). Lysine 10 bears the N6-methyllysine; alternate mark. N6-lactoyllysine; alternate is present on lysine 10. Residue serine 11 is modified to ADP-ribosylserine; alternate. Serine 11 bears the Phosphoserine; alternate mark. Position 12 is a phosphothreonine (threonine 12). Lysine 15 carries the post-translational modification N6-(2-hydroxyisobutyryl)lysine; alternate. Residue lysine 15 is modified to N6-(beta-hydroxybutyryl)lysine; alternate. Lysine 15 bears the N6-acetyllysine; alternate mark. Residue lysine 15 is modified to N6-lactoyllysine; alternate. Position 15 is an N6-glutaryllysine; alternate (lysine 15). Lysine 15 is subject to N6-succinyllysine; alternate. Arginine 18 is modified (asymmetric dimethylarginine). Arginine 18 bears the Citrulline; alternate mark. 2 positions are modified to N6-(2-hydroxyisobutyryl)lysine; alternate: lysine 19 and lysine 24. N6-(beta-hydroxybutyryl)lysine; alternate occurs at positions 19 and 24. 2 positions are modified to N6-acetyllysine; alternate: lysine 19 and lysine 24. 2 positions are modified to N6-methyllysine; alternate: lysine 19 and lysine 24. Residues lysine 19 and lysine 24 each carry the N6-lactoyllysine; alternate modification. N6-glutaryllysine; alternate occurs at positions 19 and 24. Lysine 19 and lysine 24 each carry N6-butyryllysine; alternate. Arginine 27 bears the Citrulline mark. Lysine 28 carries the post-translational modification N6,N6,N6-trimethyllysine; alternate. An N6,N6-dimethyllysine; alternate modification is found at lysine 28. Lysine 28 carries the N6-(2-hydroxyisobutyryl)lysine; alternate modification. Position 28 is an N6-acetyllysine; alternate (lysine 28). Lysine 28 carries the N6-methyllysine; alternate modification. Lysine 28 is subject to N6-lactoyllysine; alternate. Lysine 28 bears the N6-glutaryllysine; alternate mark. The residue at position 29 (serine 29) is an ADP-ribosylserine; alternate. Residue serine 29 is modified to Phosphoserine; alternate. At lysine 37 the chain carries N6,N6,N6-trimethyllysine; alternate. Lysine 37 is modified (N6,N6-dimethyllysine; alternate). Lysine 37 carries the N6-(2-hydroxyisobutyryl)lysine; alternate modification. Lysine 37 carries the N6-acetyllysine; alternate modification. Lysine 37 is subject to N6-methyllysine; alternate. At lysine 38 the chain carries N6-methyllysine. Tyrosine 42 is subject to Phosphotyrosine. Lysine 57 bears the N6,N6,N6-trimethyllysine; alternate mark. An N6-(2-hydroxyisobutyryl)lysine; alternate modification is found at lysine 57. Lysine 57 is modified (N6-(beta-hydroxybutyryl)lysine; alternate). Lysine 57 carries the post-translational modification N6-acetyllysine; alternate. Lysine 57 carries the N6-lactoyllysine; alternate modification. At lysine 57 the chain carries N6-glutaryllysine; alternate. The residue at position 57 (lysine 57) is an N6-succinyllysine; alternate. Lysine 57 is modified (N6-methyllysine). Serine 58 carries the phosphoserine modification. An N6-(2-hydroxyisobutyryl)lysine; alternate mark is found at lysine 65 and lysine 80. 2 positions are modified to N6-methyllysine; alternate: lysine 65 and lysine 80. An N6,N6,N6-trimethyllysine; alternate modification is found at lysine 80. Lysine 80 is subject to N6,N6-dimethyllysine; alternate. The residue at position 80 (lysine 80) is an N6-acetyllysine; alternate. Lysine 80 carries the N6-lactoyllysine; alternate modification. An N6-glutaryllysine; alternate modification is found at lysine 80. An N6-succinyllysine; alternate modification is found at lysine 80. Threonine 81 carries the post-translational modification Phosphothreonine. Residue serine 87 is modified to Phosphoserine. Threonine 108 is modified (phosphothreonine). Residues lysine 116 and lysine 123 each carry the N6-acetyllysine; alternate modification. N6-glutaryllysine; alternate is present on residues lysine 116 and lysine 123. Lysine 123 carries the post-translational modification N6-(2-hydroxyisobutyryl)lysine; alternate. Lysine 123 is subject to N6-methyllysine; alternate. Lysine 123 is modified (N6-succinyllysine; alternate).

The protein belongs to the histone H3 family. The nucleosome is a histone octamer containing two molecules each of H2A, H2B, H3 and H4 assembled in one H3-H4 heterotetramer and two H2A-H2B heterodimers. The octamer wraps approximately 147 bp of DNA. During nucleosome assembly the chaperone ASF1A interacts with the histone H3-H4 heterodimer. In terms of processing, acetylation is generally linked to gene activation. Acetylation on Lys-10 (H3K9ac) impairs methylation at Arg-9 (H3R8me2s). Acetylation on Lys-19 (H3K18ac) and Lys-24 (H3K24ac) favors methylation at Arg-18 (H3R17me). Acetylation at Lys-123 (H3K122ac) by EP300/p300 plays a central role in chromatin structure: localizes at the surface of the histone octamer and stimulates transcription, possibly by promoting nucleosome instability. Citrullination at Arg-9 (H3R8ci) and/or Arg-18 (H3R17ci) by PADI4 impairs methylation and represses transcription. Post-translationally, asymmetric dimethylation at Arg-18 (H3R17me2a) by CARM1 is linked to gene activation. Symmetric dimethylation at Arg-9 (H3R8me2s) by PRMT5 is linked to gene repression. Asymmetric dimethylation at Arg-3 (H3R2me2a) by PRMT6 is linked to gene repression and is mutually exclusive with H3 Lys-5 methylation (H3K4me2 and H3K4me3). H3R2me2a is present at the 3' of genes regardless of their transcription state and is enriched on inactive promoters, while it is absent on active promoters. In terms of processing, methylation at Lys-5 (H3K4me), Lys-37 (H3K36me) and Lys-80 (H3K79me) are linked to gene activation. Methylation at Lys-5 (H3K4me) facilitates subsequent acetylation of H3 and H4. Methylation at Lys-80 (H3K79me) is associated with DNA double-strand break (DSB) responses and is a specific target for TP53BP1. Methylation at Lys-10 (H3K9me) and Lys-28 (H3K27me) are linked to gene repression. Methylation at Lys-10 (H3K9me) is a specific target for HP1 proteins (CBX1, CBX3 and CBX5) and prevents subsequent phosphorylation at Ser-11 (H3S10ph) and acetylation of H3 and H4. Methylation at Lys-5 (H3K4me) and Lys-80 (H3K79me) require preliminary monoubiquitination of H2B at 'Lys-120'. Methylation at Lys-10 (H3K9me) and Lys-28 (H3K27me) are enriched in inactive X chromosome chromatin. Monomethylation at Lys-57 (H3K56me1) by EHMT2/G9A in G1 phase promotes interaction with PCNA and is required for DNA replication. Phosphorylated at Thr-4 (H3T3ph) by HASPIN during prophase and dephosphorylated during anaphase. Phosphorylation at Ser-11 (H3S10ph) by AURKB is crucial for chromosome condensation and cell-cycle progression during mitosis and meiosis. In addition phosphorylation at Ser-11 (H3S10ph) by RPS6KA4 and RPS6KA5 is important during interphase because it enables the transcription of genes following external stimulation, like mitogens, stress, growth factors or UV irradiation and result in the activation of genes, such as c-fos and c-jun. Phosphorylation at Ser-11 (H3S10ph), which is linked to gene activation, prevents methylation at Lys-10 (H3K9me) but facilitates acetylation of H3 and H4. Phosphorylation at Ser-11 (H3S10ph) by AURKB mediates the dissociation of HP1 proteins (CBX1, CBX3 and CBX5) from heterochromatin. Phosphorylation at Ser-11 (H3S10ph) is also an essential regulatory mechanism for neoplastic cell transformation. Phosphorylated at Ser-29 (H3S28ph) by MAP3K20 isoform 1, RPS6KA5 or AURKB during mitosis or upon ultraviolet B irradiation. Phosphorylation at Thr-7 (H3T6ph) by PRKCB is a specific tag for epigenetic transcriptional activation that prevents demethylation of Lys-5 (H3K4me) by LSD1/KDM1A. At centromeres, specifically phosphorylated at Thr-12 (H3T11ph) from prophase to early anaphase, by DAPK3 and PKN1. Phosphorylation at Thr-12 (H3T11ph) by PKN1 or isoform M2 of PKM (PKM2) is a specific tag for epigenetic transcriptional activation that promotes demethylation of Lys-10 (H3K9me) by KDM4C/JMJD2C. Phosphorylation at Tyr-42 (H3Y41ph) by JAK2 promotes exclusion of CBX5 (HP1 alpha) from chromatin. Post-translationally, ubiquitinated. In terms of processing, lysine deamination at Lys-5 (H3K4all) to form allysine is mediated by LOXL2. Allysine formation by LOXL2 only takes place on H3K4me3 and results in gene repression. Butyrylation of histones marks active promoters and competes with histone acetylation. It is present during late spermatogenesis. Post-translationally, succinylation at Lys-80 (H3K79succ) by KAT2A takes place with a maximum frequency around the transcription start sites of genes. It gives a specific tag for epigenetic transcription activation. Desuccinylation at Lys-123 (H3K122succ) by SIRT7 in response to DNA damage promotes chromatin condensation and double-strand breaks (DSBs) repair. In terms of processing, serine ADP-ribosylation constitutes the primary form of ADP-ribosylation of proteins in response to DNA damage. Serine ADP-ribosylation at Ser-11 (H3S10ADPr) is mutually exclusive with phosphorylation at Ser-11 (H3S10ph) and impairs acetylation at Lys-10 (H3K9ac).

The protein resides in the nucleus. Its subcellular location is the chromosome. Functionally, core component of nucleosome. Nucleosomes wrap and compact DNA into chromatin, limiting DNA accessibility to the cellular machineries which require DNA as a template. Histones thereby play a central role in transcription regulation, DNA repair, DNA replication and chromosomal stability. DNA accessibility is regulated via a complex set of post-translational modifications of histones, also called histone code, and nucleosome remodeling. The sequence is that of Histone H3-7 from Homo sapiens (Human).